Here is a 6781-residue protein sequence, read N- to C-terminus: Replicase polyprotein 1ab (6781 aa).

In terms of domain architecture, CoV Nsp1 globular spans 2–109 (ASNHVTLAFA…ELELTFGRRG (108 aa)). Residues glutamate 59, asparagine 95, glutamate 99, and glutamate 102 each coordinate ssDNA. The CoV Nsp2 N-terminal domain maps to 112-364 (IVPVDQYMCG…TKLKFDILSG (253 aa)). Positions 383 to 776 (SALVDIVDDA…AEMYNTYLST (394 aa)) constitute a CoV Nsp2 middle domain. Residues 778–895 (VENLVLAGVS…VPICFKKKGG (118 aa)) form the CoV Nsp2 C-terminal domain. The region spanning 896 to 991 (GDVKFSDEVS…VMVSQWPLND (96 aa)) is the Ubiquitin-like 1 domain. The segment at 1009–1040 (IDSEGDEVDSSAPEKVADVANSEPGDDGLPVA) is disordered. A Peptidase C16 1 domain is found at 1057–1296 (SFIKDTPSTV…EPVVKPFYSY (240 aa)). The For PL1-PRO activity role is filled by cysteine 1091. The C4-type 1; degenerate zinc finger occupies 1162–1193 (CGCGTGERIYEGCAFRMTPTLEPFPYGACAQC). Residues histidine 1239 and aspartate 1252 each act as for PL1-PRO activity in the active site. The Macro domain occupies 1297–1465 (KNVDFYQGDF…IFKEALVDTT (169 aa)). The region spanning 1630-1685 (NKSVVIKVTEDTRSVKAVKVESTATYGQQIGPCLVNDTVVTDNKPVVADVVAKVVP) is the Ubiquitin-like 2 domain. One can recognise a Peptidase C16 2 domain in the interval 1691–1951 (SHYGFDKAGE…LLDTMNYASE (261 aa)). The active-site For PL2-PRO activity is cysteine 1729. The C4-type 2; degenerate zinc finger occupies 1808 to 1838 (DGCCCSKRVVTAPVVNASVLKLGVEDGLCPH). Catalysis depends on for PL2-PRO activity residues histidine 1888 and aspartate 1901. 2 consecutive transmembrane segments (helical) span residues 1959–1979 (FMSR…GLCF) and 2022–2042 (WFKV…LLFM). The segment at 1959–2170 (FMSRNLITVF…FGDEIVVFFI (212 aa)) is HD1. Positions 2038-2102 (ALLFMTIRFT…TQVVWQHLRD (65 aa)) constitute a 3Ecto domain. Cystine bridges form between cysteine 2054–cysteine 2080 and cysteine 2072–cysteine 2077. 3 helical membrane passes run 2105-2125 (IGNV…GVYV), 2127-2147 (AITL…LGLQ), and 2150-2170 (IWFL…VFFI). Residues 2176–2266 (MFIKHVCLGC…VVKLNVQPTG (91 aa)) form a Y1 region. In terms of domain architecture, CoV Nsp3 Y spans 2176 to 2516 (MFIKHVCLGC…PTVCIANKKG (341 aa)). Zn(2+) contacts are provided by histidine 2180, cysteine 2185, cysteine 2190, cysteine 2193, cysteine 2226, histidine 2229, cysteine 2233, and cysteine 2236. A ZF1 region spans residues 2180–2193 (HVCLGCDKASCVAC). The segment at 2226 to 2236 (CKKHNFFCLNC) is ZF2. The tract at residues 2267–2356 (PATILIDKVE…LVDSALLASL (90 aa)) is Y2. The interval 2267–2516 (PATILIDKVE…PTVCIANKKG (250 aa)) is coV-Y. Positions 2357–2414 (SVDFGASLHSAFVSVLSNSFGKDLSSCNDMQDCKSTLGFDDVPLDTFNAAVAEAHRYD) are Y3. The tract at residues 2415–2516 (VLLTDMSFNN…PTVCIANKKG (102 aa)) is Y4. The next 7 membrane-spanning stretches (helical) occupy residues 2528 to 2548 (FFWF…FLDF), 2619 to 2639 (IPAG…TIFG), 2654 to 2674 (GACI…TAVY), 2754 to 2774 (GSDF…ISVF), 2787 to 2807 (ILFN…FTKF), 2814 to 2834 (MSVG…SYIV), and 2863 to 2883 (LGFL…VYAF). The HD2 stretch occupies residues 2528–2883 (FFWFLCLFIV…PWWVLMVYAF (356 aa)). One can recognise a Nsp4C domain in the interval 2902–2997 (LFEGDKFVGS…PTVSYNSTLQ (96 aa)). A Peptidase C30 domain is found at 2998–3299 (AGLRKMAQPS…VRQMYGVNLQ (302 aa)). Residues histidine 3038 and cysteine 3141 each act as for 3CL-PRO activity in the active site. Helical transmembrane passes span 3336–3356 (GYVT…MFTL), 3361–3381 (LFFQ…NLAF), 3399–3419 (LMGF…VTIL), 3431–3451 (PASS…YFYA), 3454–3474 (ILSC…VGAV), 3476–3496 (YKVA…FGDI), and 3500–3520 (MFCY…LYWF). Residues 3336–3520 (GYVTPMFACL…CCFYGILYWF (185 aa)) are HD3. Residues 3580 to 3662 (SKLTDIKCSN…SYFNDNSMLQ (83 aa)) enclose the RdRp Nsp7 cofactor domain. Residues 3663–3857 (SVASTYVGLP…LGCERIVKLQ (195 aa)) form the RdRp Nsp8 cofactor domain. The 108-residue stretch at 3858–3965 (NNEIIPGKLK…GYIGATVRLQ (108 aa)) folds into the Nsp9 ssRNA-binding domain. Residues 3966–4103 (AGKQTEQAIN…CDRSIMQSTD (138 aa)) form the ExoN/MTase coactivator domain. 8 residues coordinate Zn(2+): cysteine 4039, cysteine 4042, histidine 4048, cysteine 4055, cysteine 4081, cysteine 4084, cysteine 4092, and cysteine 4094. Zinc fingers lie at residues 4039–4055 (CLYC…DGFC) and 4081–4094 (CKVC…GCTC). Residues 4106 to 4355 (YLNRVRGSSA…ASECFVKSDI (250 aa)) enclose the NiRAN domain. Positions 4361-4459 (KSYDLLEYDF…WNNDLNLHSS (99 aa)) constitute a Nsp12 Interface domain. Residues histidine 4390, cysteine 4396, cysteine 4401, cysteine 4405, and cysteine 4582 each coordinate Zn(2+). A Nsp12 RNA-dependent RNA polymerase domain is found at 4460 to 5027 (RLSINELLQF…NMYEKSAVLQ (568 aa)). Residues 4462–4676 (SINELLQFCS…HQKHLKSIVN (215 aa)) form a rdRp Fingers N-ter region. The interval 4677 to 4715 (TRGASVVIGTTKFYGGWDNMLKNLIDGVENPCLMGWDYP) is rdRp Palm N-ter. In terms of domain architecture, RdRp catalytic spans 4707–4869 (PCLMGWDYPK…CYNNDYASLG (163 aa)). Positions 4716–4774 (KCDRALPNMIRMISAMILGSKHTTCCSSTDRFFRLCNELAQVLTEVVYSNGGFYLKPGG) are rdRp Fingers C-ter. Residues histidine 4737, cysteine 4740, and cysteine 4741 each contribute to the Zn(2+) site. The rdRp Palm C-ter stretch occupies residues 4775–4910 (TTSGDATTAY…NKGPHEFCSQ (136 aa)). Catalysis depends on for RNA-directed RNA polymerase activity residues serine 4854, aspartate 4855, and aspartate 4856. The tract at residues 4911–5027 (HTMQIVDKEG…NMYEKSAVLQ (117 aa)) is rdRp Thumb. In terms of domain architecture, CV ZBD spans 5028–5140 (SAGLCVVCGS…EDFNRIATSD (113 aa)). The Zn(2+) site is built by cysteine 5032, cysteine 5035, cysteine 5043, cysteine 5046, cysteine 5053, cysteine 5056, histidine 5060, histidine 5066, cysteine 5077, cysteine 5082, cysteine 5099, and histidine 5102. Residues 5275–5466 (STIHKLHPAF…MCALKPDVFL (192 aa)) enclose the (+)RNA virus helicase ATP-binding domain. An ATP-binding site is contributed by 5310–5317 (GPPGSGKS). Positions 5467 to 5636 (HKCYRCPAEI…EGCGLFKDCS (170 aa)) constitute a (+)RNA virus helicase C-terminal domain. An ExoN domain is found at 5696-5910 (LFCTRDFAMR…RCLAIHDCFV (215 aa)). Residues aspartate 5714, glutamate 5716, and glutamate 5815 each act as for exoribonuclease activity in the active site. 7 residues coordinate Zn(2+): cysteine 5831, cysteine 5833, cysteine 5849, histidine 5852, histidine 5880, cysteine 5884, and histidine 5887. Catalysis depends on for exoribonuclease activity residues histidine 5891 and aspartate 5896. Cysteine 5902 contributes to the Zn(2+) binding site. Positions 5919–6140 (YPFIGNEAVI…NLWQTFSNNL (222 aa)) constitute an N7-MTase domain. 5954–5960 (DIGNPKG) is a binding site for S-adenosyl-L-methionine. Positions 6031–6045 (CNGGSLYVNNHAFHT) are gpppA-binding. 4 residues coordinate Zn(2+): cysteine 6069, cysteine 6086, cysteine 6097, and histidine 6100. Residues 6142–6202 (GLENIAFNVL…NVAFELYAKR (61 aa)) enclose the Nsp15 N-terminal oligomerization domain. Residues 6203 to 6320 (KVGLTPPITI…IYTRKNGKFE (118 aa)) enclose the AV-Nsp11N/CoV-Nsp15M domain. The 141-residue stretch at 6337 to 6477 (SPRSDMEKDF…KDHKLQTFYP (141 aa)) folds into the NendoU domain. Catalysis depends on for uridylate-specific endoribonuclease activity residues histidine 6367, histidine 6382, and lysine 6423. The region spanning 6481–6777 (ASEWKCGYSM…AICGFSNHLV (297 aa)) is the Nidovirus-type SAM-dependent 2'-O-MTase domain. Catalysis depends on for 2'-O-methyltransferase residues lysine 6525, aspartate 6609, lysine 6649, and glutamate 6682.

It belongs to the coronaviruses polyprotein 1ab family. As to quaternary structure, interacts with PL-PRO and nsp6. Monomer. Homodimer; disulfide-linked. In terms of assembly, interacts with nsp8 and nsp12 to form the replication-transcription complex (RTC): nsp12, nsp7, two subunits of nsp8, and up to two subunits of nsp13. Eight copies of nsp7 and eight copies of nsp8 assemble to form a heterohexadecamer dsRNA-encircling ring structure. As to quaternary structure, interacts with nsp7, nsp13 and nsp12 to form the replication-transcription complex (RTC): nsp12, nsp7, two subunits of nsp8, and up to two subunits of nsp13. Eight copies of nsp7 and eight copies of nsp8 assemble to form a heterohexadecamer dsRNA-encircling ring structure. Homodimer. In terms of assembly, forms a dodecamer and interacts with nsp14 and nsp16; these interactions enhance nsp14 and nsp16 enzymatic activities. Mn(2+) serves as cofactor. In terms of processing, specific enzymatic cleavages in vivo by its own proteases yield mature proteins. 3CL-PRO and PL-PRO proteinases are autocatalytically processed.

It localises to the host cytoplasm. The protein resides in the host nucleus. The protein localises to the host membrane. It is found in the host perinuclear region. Its subcellular location is the host endoplasmic reticulum. It localises to the host endoplasmic reticulum-Golgi intermediate compartment. The enzyme catalyses Thiol-dependent hydrolysis of ester, thioester, amide, peptide and isopeptide bonds formed by the C-terminal Gly of ubiquitin (a 76-residue protein attached to proteins as an intracellular targeting signal).. The catalysed reaction is a 5'-end diphospho-ribonucleoside in mRNA + GTP + H(+) = a 5'-end (5'-triphosphoguanosine)-ribonucleoside in mRNA + diphosphate. It carries out the reaction RNA(n) + a ribonucleoside 5'-triphosphate = RNA(n+1) + diphosphate. It catalyses the reaction ATP + H2O = ADP + phosphate + H(+). The enzyme catalyses a 5'-end (5'-triphosphoguanosine)-ribonucleoside in mRNA + S-adenosyl-L-methionine = a 5'-end (N(7)-methyl 5'-triphosphoguanosine)-ribonucleoside in mRNA + S-adenosyl-L-homocysteine. The catalysed reaction is uridylyl-uridylyl-ribonucleotide-RNA = a 3'-end uridylyl-2',3'-cyclophospho-uridine-RNA + a 5'-end dephospho-ribonucleoside-RNA. It carries out the reaction a 5'-end (N(7)-methyl 5'-triphosphoguanosine)-ribonucleoside in mRNA + S-adenosyl-L-methionine = a 5'-end (N(7)-methyl 5'-triphosphoguanosine)-(2'-O-methyl-ribonucleoside) in mRNA + S-adenosyl-L-homocysteine + H(+). Inhibited by the substrate-analog Cbz-Val-Asn-Ser-Thr-Leu-Gln-CMK. Inhibited by (R)-16. Its function is as follows. Multifunctional protein responsible for the transcription of negative stranded RNA, leader RNA, subgenomic mRNAs and progeny virion RNA as well as proteinases responsible for the cleavage of the polyprotein into functional products. Functionally, plays a role in the inhibition of host interferon and pro-inflammatory cytokines production. Suppresses host RELA/p65 activation by blocking NFKBIA phosphorylation. Targets also the RLR pathway downstream of the IRF3 activation by targeting host CREBBP to proteasomal degradation. Responsible for the cleavages located at the N-terminus of the replicase polyprotein. Participates together with nsp4 in the assembly of virally-induced cytoplasmic double-membrane vesicles necessary for viral replication. Forms a molecular pore spanning the double membrane of the coronavirus replication organelle. In addition, PLP2 possesses a deubiquitinating/deISGylating activity and processes both 'Lys-48'- and 'Lys-63'-linked polyubiquitin chains from cellular substrates. PLP2 also antagonizes innate immune induction of type I interferon by blocking the nuclear translocation of host IRF-3. Participates in the inhibition of the integrated stress response (ISR) in the infected host cell. In terms of biological role, participates in the assembly of virally-induced cytoplasmic double-membrane vesicles necessary for viral replication. Its function is as follows. Responsible for the majority of cleavages as it cleaves the C-terminus of replicase polyprotein at 11 sites. Recognizes substrates containing the core sequence [ILMVF]-Q-|-[SGACN]. Also contains an ADP-ribose-1''-phosphate (ADRP)-binding function. Participates in the inhibition of the integrated stress response (ISR) in the infected host cell. Functionally, plays a role in the initial induction of autophagosomes from host endoplasmic reticulum. Later, limits the expansion of these phagosomes that are no longer able to deliver viral components to lysosomes. Plays a role in viral RNA synthesis. Forms a hexadecamer with nsp8 (8 subunits of each) that may participate in viral replication by acting as a primase. Alternatively, may synthesize substantially longer products than oligonucleotide primers. In terms of biological role, plays a role in viral RNA synthesis. Forms a hexadecamer with nsp7 (8 subunits of each) that may participate in viral replication by acting as a primase. Alternatively, may synthesize substantially longer products than oligonucleotide primers. Its function is as follows. Forms a primer, NSP9-pU, which is utilized by the polymerase for the initiation of RNA chains. Interacts with ribosome signal recognition particle RNA (SRP). Together with NSP8, suppress protein integration into the cell membrane, thereby disrupting host immune defenses. Functionally, plays a pivotal role in viral transcription by stimulating both nsp14 3'-5' exoribonuclease and nsp16 2'-O-methyltransferase activities. Therefore plays an essential role in viral mRNAs cap methylation. RNA-directed RNA polymerase that catalyzes the transcription of viral genomic and subgenomic RNAs. Acts in complex with nsp7 and nsp8 to transcribe both the minus and positive strands of genomic RNA. The kinase-like NiRAN domain of NSP12 attaches one or more nucleotides to the amino terminus of NSP9, forming a covalent RNA-protein intermediate that serves as transcription/replication primer. Subgenomic RNAs (sgRNAs) are formed by discontinuous transcription: The polymerase has the ability to pause at transcription-regulating sequences (TRS) and jump to the leader TRS, resulting in a major deletion. This creates a series of subgenomic RNAs that are replicated, transcribed and translated. In addition, Nsp12 is a subunit of the viral RNA capping enzyme that catalyzes the RNA guanylyltransferase reaction for genomic and sub-genomic RNAs. Subsequently, the NiRAN domain transfers RNA to GDP, and forms the core cap structure GpppA-RNA. In terms of biological role, plays a role in viral RNA synthesis. Multi-functional protein with a zinc-binding domain in N-terminus displaying RNA and DNA duplex-unwinding activities with 5' to 3' polarity. ATPase activity is strongly stimulated by poly(U), poly(dT), poly(C), poly(dA), but not by poly(G). Its function is as follows. Plays a role in viral RNA synthesis through two distinct activities. The N7-guanine methyltransferase activity plays a role in the formation of the cap structure GpppA-RNA. The proofreading exoribonuclease reduces the sensitivity of the virus to RNA mutagens during replication. This activity acts on both ssRNA and dsRNA in a 3'-5' direction. Functionally, plays a role in viral transcription/replication and prevents the simultaneous activation of host cell dsRNA sensors, such as MDA5/IFIH1, OAS, and PKR. Acts by degrading the 5'-polyuridines generated during replication of the poly(A) region of viral genomic and subgenomic RNAs. Catalyzes a two-step reaction in which a 2'3'-cyclic phosphate (2'3'-cP) is first generated by 2'-O transesterification, which is then hydrolyzed to a 3'-phosphate (3'-P). If not degraded, poly(U) RNA would hybridize with poly(A) RNA tails and activate host dsRNA sensors. Decreases the RNA levels and thus the expression of host TBK1 and IRF3, antagonizing the host innate response. This Sus scrofa (Pig) protein is Replicase polyprotein 1ab (rep).